Here is a 218-residue protein sequence, read N- to C-terminus: MTKKTLDLSVYFIAGSQNFSECSLDEATQKIALIIKSGVTVYQFRDKGTIYKEQKQRLSIAQKLQKVSEEAGVSFIVNDDVELARELNADGIHIGQTDESVSKVREKVGQEMWLGLSVTNADELKTAQSSGADYLGIGPIYPTNSKNDAAKPIGIKDLRLMLLENQLPIVGIGGITQDSLTELSAIGLDGLAVISLLTEAENPKKVAQMIRQKITKNG.

4-amino-2-methyl-5-(diphosphooxymethyl)pyrimidine is bound by residues 43 to 47 and Asn-78; that span reads QFRDK. Mg(2+) contacts are provided by Asp-79 and Asp-98. Ser-117 serves as a coordination point for 4-amino-2-methyl-5-(diphosphooxymethyl)pyrimidine. 2-[(2R,5Z)-2-carboxy-4-methylthiazol-5(2H)-ylidene]ethyl phosphate is bound at residue 143–145; the sequence is TNS. Position 146 (Lys-146) interacts with 4-amino-2-methyl-5-(diphosphooxymethyl)pyrimidine. Residues Gly-174 and 194–195 each bind 2-[(2R,5Z)-2-carboxy-4-methylthiazol-5(2H)-ylidene]ethyl phosphate; that span reads IS.

Belongs to the thiamine-phosphate synthase family. Mg(2+) serves as cofactor.

It carries out the reaction 2-[(2R,5Z)-2-carboxy-4-methylthiazol-5(2H)-ylidene]ethyl phosphate + 4-amino-2-methyl-5-(diphosphooxymethyl)pyrimidine + 2 H(+) = thiamine phosphate + CO2 + diphosphate. The catalysed reaction is 2-(2-carboxy-4-methylthiazol-5-yl)ethyl phosphate + 4-amino-2-methyl-5-(diphosphooxymethyl)pyrimidine + 2 H(+) = thiamine phosphate + CO2 + diphosphate. The enzyme catalyses 4-methyl-5-(2-phosphooxyethyl)-thiazole + 4-amino-2-methyl-5-(diphosphooxymethyl)pyrimidine + H(+) = thiamine phosphate + diphosphate. Its pathway is cofactor biosynthesis; thiamine diphosphate biosynthesis; thiamine phosphate from 4-amino-2-methyl-5-diphosphomethylpyrimidine and 4-methyl-5-(2-phosphoethyl)-thiazole: step 1/1. Condenses 4-methyl-5-(beta-hydroxyethyl)thiazole monophosphate (THZ-P) and 2-methyl-4-amino-5-hydroxymethyl pyrimidine pyrophosphate (HMP-PP) to form thiamine monophosphate (TMP). The sequence is that of Thiamine-phosphate synthase from Lactococcus lactis subsp. cremoris (strain MG1363).